Here is a 410-residue protein sequence, read N- to C-terminus: Regulator of microtubule dynamics protein 2 (410 aa).

Residues 9-28 (LILGIMVGTAGISLLLLWYH) traverse the membrane as a helical segment. Serine 51 carries the phosphoserine modification. The stretch at 68 to 110 (FQERQLQILEKLNELLTNMEELKEEIRFLKEAIPKLEEYIQDE) forms a coiled coil. Phosphoserine is present on serine 121. The segment covering 122–131 (PQHRARKRRL) has biased composition (basic residues). Residues 122–164 (PQHRARKRRLPTIQSSATSNSSEEAESEGGYITANTDTEEQSF) form a disordered region. Residue threonine 139 is modified to Phosphothreonine. Tyrosine 152 carries the post-translational modification Phosphotyrosine. Phosphothreonine is present on residues threonine 154 and threonine 157.

This sequence belongs to the RMDN family. Interacts with microtubules.

It localises to the membrane. Its subcellular location is the cytoplasm. The protein resides in the cytoskeleton. It is found in the spindle. The protein localises to the spindle pole. In Homo sapiens (Human), this protein is Regulator of microtubule dynamics protein 2 (RMDN2).